The primary structure comprises 571 residues: Vesicle-associated protein 1-4 (571 aa).

In terms of domain architecture, MSP 1 spans 1-126; it reads MSTDELLTFD…EETIFKIIYV (126 aa). The segment at 132 to 154 is disordered; the sequence is QSPVQEGLEDGSSPSASVSDKGN. Positions 143 to 153 are enriched in polar residues; sequence SSPSASVSDKG. The region spanning 176 to 296 is the MSP 2 domain; sequence LLIIDPVDVQ…EETRLKVMYV (121 aa). The tract at residues 297–322 is disordered; that stretch reads TPPQPPSPVQEGTEEGSSPRASVSDN. The span at 311 to 322 shows a compositional bias: polar residues; that stretch reads EGSSPRASVSDN. The region spanning 356-493 is the TIR domain; sequence PQYQVFINFR…KWKEALSSVF (138 aa). Glu-430 is an active-site residue.

It belongs to the VAMP-associated protein (VAP) (TC 9.B.17) family.

It carries out the reaction NAD(+) + H2O = ADP-D-ribose + nicotinamide + H(+). Functionally, may play a role in vesicle trafficking. The sequence is that of Vesicle-associated protein 1-4 (PVA14) from Arabidopsis thaliana (Mouse-ear cress).